The chain runs to 729 residues: Serine/threonine-protein kinase TBK1 (729 aa).

Residues 9 to 310 (WLLSDILGQG…ETSDVLHRMV (302 aa)) form the Protein kinase domain. ATP is bound at residue 15–23 (LGQGATANV). Residue Lys30 forms a Glycyl lysine isopeptide (Lys-Gly) (interchain with G-Cter in ubiquitin) linkage. Lys38 is an ATP binding site. The Proton acceptor role is filled by Asp135. The residue at position 172 (Ser172) is a Phosphoserine; by autocatalysis and IKKB. The region spanning 309 to 385 (MVIHVFSLQH…ENPIFVTSRE (77 aa)) is the Ubiquitin-like domain. Residue Lys401 forms a Glycyl lysine isopeptide (Lys-Gly) (interchain with G-Cter in ubiquitin) linkage. Coiled coils occupy residues 407–657 (DLDG…LQET) and 658–713 (LPQK…ILER). The interaction with AZI2, TANK and TBKBP1 stretch occupies residues 621 to 729 (RKMLHLRKQL…DGGLRNVDCL (109 aa)). Lys670 is covalently cross-linked (Glycyl lysine isopeptide (Lys-Gly) (interchain with G-Cter in ubiquitin)). Ser716 carries the phosphoserine modification.

This sequence belongs to the protein kinase superfamily. Ser/Thr protein kinase family. I-kappa-B kinase subfamily. Homodimer. Interacts with DDX3X, TIRAP and TRAF2. Part of a ternary complex consisting of TANK, TRAF2 and TBK1. Interacts with AZI2, TANK and TBKBP1; these interactions are mutually exclusive and mediate TBK1 activation. Interacts with GSK3B; this interaction promotes TBK1 self-association and autophosphorylation. Interacts with SIKE1; SIKE1 is associated with TBK1 under physiological condition and dissociated from TBK1 upon viral infection or TLR3 stimulation. Interacts with IRF3, leading to IRF3 phosphorylation. Interacts with RIGI. Interacts with CYLD. Interacts with OPTN and TRAF3. Interacts with SRC. Interacts with the exocyst complex subunit SEC5/EXOC2; this interaction is sufficient to trigger TBK1 activity. Interacts with STING1, leading to STING1 phosphorylation. Interacts with IFIT3 (via N-terminus). Interacts with MAVS; interaction only takes place in the presence of IFIT3 and leads to MAVS phosphorylation. Interacts (via protein kinase domain) with TTLL12 (via TTL domain); the interaction prevents MAVS binding to TBK1. Interacts with TICAM1; this interaction is enhanced in the presence of WDFY1 and leads to TICAM1 phosphorylation. Interacts with TRIM26. Interacts with TRIM23. Interacts with TTC4 and IKBKE. Interacts with HNRNPA2B1. Interacts with DDX3X. Interacts with TRIM14. Interacts with CEP170; efficient complex formation may be dependent on the presence of CCDC61. Interacts with TRAF3IP3. Interacts with HSP90AA1; the interaction mediates TBK1 association with TOMM70. Interacts with TAX1BP1. Interacts with kinase IKBKB; the complex interacts with STAT1, leading to phosphorylation of STAT1 on 'Thr-748' by IKBKB. Interacts with ICOS; this interaction is critical for the maturation of T follicular regulatory cells. Interacts with RNF144B; this interaction prevents TBK1 phosphorylation and subsequent activation. Interacts with ASB8; this interaction promotes TBK1 proteasomal degradation. Post-translationally, autophosphorylation at Ser-172 activates the kinase, and is an essential step for virus-triggered signaling. Phosphorylated by IKBKB/IKKB at Ser-172. Phosphorylation requires homodimerization and ubiquitination at Lys-30 and Lys-401. Dephosphorylated at Ser-172 by PPM1B and this negatively regulates its role in mediating antiviral response. In terms of processing, 'Lys-63'-linked polyubiquitination by MIB1 after RNA virus infection, or by NRDP1 after LPS stimulation at Lys-30 and Lys-401, participates in kinase activation. 'Lys-48'-linked polyubiquitination at Lys-670 by DTX4 leads to proteasomal degradation. 'Lys-48'-linked polyubiquitination by TRAIP also leads to proteasomal degradation. 'Lys-48'-linked polyubiquitination by TRAF7; leading to proteasomal degradation. 'Lys-63'-linked polyubiquitination by RNF128 at Lys-30 and Lys-401 leads to the activation of antiviral responses. 'Lys-48'-linked polyubiquitination after 'lys-33'-linked deubiquitination by USP38 promotes TBK1 degradation.

Its subcellular location is the cytoplasm. It carries out the reaction L-seryl-[protein] + ATP = O-phospho-L-seryl-[protein] + ADP + H(+). The enzyme catalyses L-threonyl-[protein] + ATP = O-phospho-L-threonyl-[protein] + ADP + H(+). Its activity is regulated as follows. Kinase activity is inhibited competitively by amlexanox. In terms of biological role, serine/threonine kinase that plays an essential role in regulating inflammatory responses to foreign agents. Following activation of toll-like receptors by viral or bacterial components, associates with TRAF3 and TANK and phosphorylates interferon regulatory factors (IRFs) IRF3 and IRF7 as well as DDX3X. This activity allows subsequent homodimerization and nuclear translocation of the IRFs leading to transcriptional activation of pro-inflammatory and antiviral genes including IFNA and IFNB. In order to establish such an antiviral state, TBK1 form several different complexes whose composition depends on the type of cell and cellular stimuli. Thus, several scaffolding molecules including FADD, TRADD, MAVS, AZI2, TANK or TBKBP1/SINTBAD can be recruited to the TBK1-containing-complexes. Plays a key role in IRF3 activation: acts by first phosphorylating innate adapter proteins MAVS, STING1 and TICAM1 on their pLxIS motif, leading to recruitment of IRF3, thereby licensing IRF3 for phosphorylation by TBK1. Under particular conditions, functions as a NF-kappa-B effector by phosphorylating NF-kappa-B inhibitor alpha/NFKBIA, IKBKB or RELA to translocate NF-Kappa-B to the nucleus. Restricts bacterial proliferation by phosphorylating the autophagy receptor OPTN/Optineurin on 'Ser-177', thus enhancing LC3 binding affinity and antibacterial autophagy. Phosphorylates SMCR8 component of the C9orf72-SMCR8 complex, promoting autophagosome maturation. Phosphorylates ATG8 proteins MAP1LC3C and GABARAPL2, thereby preventing their delipidation and premature removal from nascent autophagosomes. Seems to play a role in energy balance regulation by sustaining a state of chronic, low-grade inflammation in obesity, which leads to a negative impact on insulin sensitivity. Acts both as a positive and negative regulator of the mTORC1 complex, depending on the context: activates mTORC1 in response to growth factors by catalyzing phosphorylation of MTOR, while it limits the mTORC1 complex by promoting phosphorylation of RPTOR. Acts as a positive regulator of the mTORC2 complex by mediating phosphorylation of MTOR, leading to increased phosphorylation and activation of AKT1. Phosphorylates and activates AKT1. Involved in the regulation of TNF-induced RIPK1-mediated cell death, probably acting via CYLD phosphorylation that in turn controls RIPK1 ubiquitination status. Also participates in the differentiation of T follicular regulatory cells together with the receptor ICOS. The chain is Serine/threonine-protein kinase TBK1 from Mus musculus (Mouse).